The sequence spans 435 residues: 3-ketoacyl-CoA thiolase (435 aa).

Cysteine 98 (acyl-thioester intermediate) is an active-site residue. Residues histidine 391 and cysteine 421 each act as proton acceptor in the active site.

This sequence belongs to the thiolase-like superfamily. Thiolase family. In terms of assembly, heterotetramer of two alpha chains (FadJ) and two beta chains (FadI).

It localises to the cytoplasm. The enzyme catalyses an acyl-CoA + acetyl-CoA = a 3-oxoacyl-CoA + CoA. The protein operates within lipid metabolism; fatty acid beta-oxidation. Its function is as follows. Catalyzes the final step of fatty acid oxidation in which acetyl-CoA is released and the CoA ester of a fatty acid two carbons shorter is formed. This chain is 3-ketoacyl-CoA thiolase, found in Vibrio cholerae serotype O1 (strain ATCC 39541 / Classical Ogawa 395 / O395).